A 278-amino-acid chain; its full sequence is Juvenile hormone acid O-methyltransferase (278 aa).

It belongs to the methyltransferase superfamily. In terms of tissue distribution, specifically expressed in the corpora allata (CA).

It catalyses the reaction (2E,6E)-farnesoate + S-adenosyl-L-methionine = methyl (2E,6E)-farnesoate + S-adenosyl-L-homocysteine. The catalysed reaction is juvenile hormone III carboxylate + S-adenosyl-L-methionine = juvenile hormone III + S-adenosyl-L-homocysteine. Functionally, O-methyltransferase that transfers a methyl group from S-adenosyl-L-methionine (SAM) to the carboxyl group of juvenile hormone acids to produce active juvenile hormones in the corpora allata, the last step during juvenile hormone biosynthesis. Also able to methylate farnesoate to methyl farnesoate. This Bombyx mori (Silk moth) protein is Juvenile hormone acid O-methyltransferase.